The following is a 119-amino-acid chain: Large ribosomal subunit protein uL18 (119 aa).

Belongs to the universal ribosomal protein uL18 family. Part of the 50S ribosomal subunit; part of the 5S rRNA/L5/L18/L25 subcomplex. Contacts the 5S and 23S rRNAs.

Its function is as follows. This is one of the proteins that bind and probably mediate the attachment of the 5S RNA into the large ribosomal subunit, where it forms part of the central protuberance. In Xanthomonas oryzae pv. oryzae (strain PXO99A), this protein is Large ribosomal subunit protein uL18.